A 563-amino-acid chain; its full sequence is Endoglucanase B (563 aa).

Residues 1–27 (MKKFLVLLIALIMIATLLVVPGVQTSA) constitute a signal peptide (or 31). The active-site Proton donor is glutamate 204. Glutamate 363 functions as the Nucleophile in the catalytic mechanism. The interval 476 to 495 (SVTPSPSATPSPTTITAPPT) is disordered. The region spanning 496 to 562 (DTVTYGDVNG…VLRSISELPY (67 aa)) is the Dockerin domain.

This sequence belongs to the glycosyl hydrolase 5 (cellulase A) family.

The catalysed reaction is Endohydrolysis of (1-&gt;4)-beta-D-glucosidic linkages in cellulose, lichenin and cereal beta-D-glucans.. This enzyme catalyzes the endohydrolysis of 1,4-beta-glucosidic linkages in cellulose, lichenin and cereal beta-D-glucans. The polypeptide is Endoglucanase B (celB) (Acetivibrio thermocellus (strain ATCC 27405 / DSM 1237 / JCM 9322 / NBRC 103400 / NCIMB 10682 / NRRL B-4536 / VPI 7372) (Clostridium thermocellum)).